The following is a 54-amino-acid chain: Photosystem II reaction center protein K (54 aa).

The propeptide occupies M1–A17. A helical membrane pass occupies residues L29 to A49.

It belongs to the PsbK family. In terms of assembly, PSII is composed of 1 copy each of membrane proteins PsbA, PsbB, PsbC, PsbD, PsbE, PsbF, PsbH, PsbI, PsbJ, PsbK, PsbL, PsbM, PsbT, PsbY, PsbZ, Psb30/Ycf12, at least 3 peripheral proteins of the oxygen-evolving complex and a large number of cofactors. It forms dimeric complexes.

The protein resides in the plastid. It localises to the chloroplast thylakoid membrane. One of the components of the core complex of photosystem II (PSII). PSII is a light-driven water:plastoquinone oxidoreductase that uses light energy to abstract electrons from H(2)O, generating O(2) and a proton gradient subsequently used for ATP formation. It consists of a core antenna complex that captures photons, and an electron transfer chain that converts photonic excitation into a charge separation. This is Photosystem II reaction center protein K from Euglena mutabilis.